The sequence spans 1058 residues: Carbamoyl phosphate synthase large chain (1058 aa).

The interval 1 to 401 (MPKRKDIQKI…SLLKACRSLE (401 aa)) is carboxyphosphate synthetic domain. 12 residues coordinate ATP: arginine 129, arginine 169, glycine 175, glycine 176, arginine 208, isoleucine 210, glutamate 215, glycine 241, isoleucine 242, histidine 243, glutamine 284, and glutamate 298. The ATP-grasp 1 domain maps to 133–327 (KQLMQELDQP…IAKLAAKIAV (195 aa)). Mg(2+) contacts are provided by glutamine 284, glutamate 298, and asparagine 300. Residues glutamine 284, glutamate 298, and asparagine 300 each contribute to the Mn(2+) site. The interval 402–546 (IGVCHNEMTS…YSTYELENES (145 aa)) is oligomerization domain. A carbamoyl phosphate synthetic domain region spans residues 547–929 (VQSNKESILV…ALYKAFEANN (383 aa)). The region spanning 671-861 (EKALKELGIP…MAQIATKLIL (191 aa)) is the ATP-grasp 2 domain. The ATP site is built by arginine 707, serine 746, isoleucine 748, glutamate 752, glycine 777, valine 778, histidine 779, serine 780, glutamine 820, and glutamate 832. Positions 820, 832, and 834 each coordinate Mg(2+). Mn(2+)-binding residues include glutamine 820, glutamate 832, and asparagine 834. Residues 930 to 1058 (SHLSEFGQIV…ESRCFNIEAI (129 aa)) form the MGS-like domain. Residues 930 to 1058 (SHLSEFGQIV…ESRCFNIEAI (129 aa)) are allosteric domain.

It belongs to the CarB family. Composed of two chains; the small (or glutamine) chain promotes the hydrolysis of glutamine to ammonia, which is used by the large (or ammonia) chain to synthesize carbamoyl phosphate. Tetramer of heterodimers (alpha,beta)4. Mg(2+) serves as cofactor. It depends on Mn(2+) as a cofactor.

It catalyses the reaction hydrogencarbonate + L-glutamine + 2 ATP + H2O = carbamoyl phosphate + L-glutamate + 2 ADP + phosphate + 2 H(+). The enzyme catalyses hydrogencarbonate + NH4(+) + 2 ATP = carbamoyl phosphate + 2 ADP + phosphate + 2 H(+). The protein operates within amino-acid biosynthesis; L-arginine biosynthesis; carbamoyl phosphate from bicarbonate: step 1/1. It participates in pyrimidine metabolism; UMP biosynthesis via de novo pathway; (S)-dihydroorotate from bicarbonate: step 1/3. Functionally, large subunit of the glutamine-dependent carbamoyl phosphate synthetase (CPSase). CPSase catalyzes the formation of carbamoyl phosphate from the ammonia moiety of glutamine, carbonate, and phosphate donated by ATP, constituting the first step of 2 biosynthetic pathways, one leading to arginine and/or urea and the other to pyrimidine nucleotides. The large subunit (synthetase) binds the substrates ammonia (free or transferred from glutamine from the small subunit), hydrogencarbonate and ATP and carries out an ATP-coupled ligase reaction, activating hydrogencarbonate by forming carboxy phosphate which reacts with ammonia to form carbamoyl phosphate. In Streptococcus pyogenes serotype M49 (strain NZ131), this protein is Carbamoyl phosphate synthase large chain.